The primary structure comprises 325 residues: Beta-ketoacyl-[acyl-carrier-protein] synthase III (325 aa).

Residues Cys-112 and His-250 contribute to the active site. Residues 251–255 are ACP-binding; that stretch reads QANSR. Residue Asn-280 is part of the active site.

This sequence belongs to the thiolase-like superfamily. FabH family. As to quaternary structure, homodimer.

Its subcellular location is the cytoplasm. It carries out the reaction malonyl-[ACP] + acetyl-CoA + H(+) = 3-oxobutanoyl-[ACP] + CO2 + CoA. Its pathway is lipid metabolism; fatty acid biosynthesis. Catalyzes the condensation reaction of fatty acid synthesis by the addition to an acyl acceptor of two carbons from malonyl-ACP. Catalyzes the first condensation reaction which initiates fatty acid synthesis and may therefore play a role in governing the total rate of fatty acid production. Possesses both acetoacetyl-ACP synthase and acetyl transacylase activities. Its substrate specificity determines the biosynthesis of branched-chain and/or straight-chain of fatty acids. The chain is Beta-ketoacyl-[acyl-carrier-protein] synthase III from Lactococcus lactis subsp. cremoris (strain SK11).